We begin with the raw amino-acid sequence, 326 residues long: Phenylalanine--tRNA ligase alpha subunit (326 aa).

Glu-251 contributes to the Mg(2+) binding site.

This sequence belongs to the class-II aminoacyl-tRNA synthetase family. Phe-tRNA synthetase alpha subunit type 1 subfamily. In terms of assembly, tetramer of two alpha and two beta subunits. Mg(2+) is required as a cofactor.

The protein localises to the cytoplasm. It carries out the reaction tRNA(Phe) + L-phenylalanine + ATP = L-phenylalanyl-tRNA(Phe) + AMP + diphosphate + H(+). In Idiomarina loihiensis (strain ATCC BAA-735 / DSM 15497 / L2-TR), this protein is Phenylalanine--tRNA ligase alpha subunit.